The chain runs to 413 residues: Coiled-coil domain-containing protein 83 (413 aa).

The disordered stretch occupies residues 1-21 (MENSGKANKKDTHDGPPKEIK). A compositionally biased stretch (basic and acidic residues) spans 8 to 21 (NKKDTHDGPPKEIK). Coiled-coil stretches lie at residues 37–184 (EDAV…RKKI) and 216–256 (WEND…LSNC).

This chain is Coiled-coil domain-containing protein 83 (CCDC83), found in Homo sapiens (Human).